The sequence spans 339 residues: MVREEVAGSTQTLQWKCVESRVDSKRLYYGRFILSPLRKGQADTVGIALRRALLGEIEGTCITRAKFGSVPHEYSTIAGIEESVQEILLNLKEIVLRSNLYGVRDASICVKGPRYITAQDIILPPSVEIVDTAQPIANLTEPIDFCIDLQIKRDRGYQTELRKNYQDGSYPIDAVSMPVRNVNYSIFSCGNGNEKHEILFLEIWTNGSLTPKEALYEASRNLIDLFLPFLHAEEEGTSFEENKNRFTPPLFTFQKRLTNLKKNKKGIPLNCIFIDQLELTSRTYNCLKRANIHTLLDLLSKTEEDLMRIDSFRMEDRKHIWDTLEKHLPIDLLKNKLSF.

The alpha N-terminal domain (alpha-NTD) stretch occupies residues 1–233 (MVREEVAGST…DLFLPFLHAE (233 aa)). The tract at residues 266 to 339 (GIPLNCIFID…IDLLKNKLSF (74 aa)) is alpha C-terminal domain (alpha-CTD).

It belongs to the RNA polymerase alpha chain family. In terms of assembly, in plastids the minimal PEP RNA polymerase catalytic core is composed of four subunits: alpha, beta, beta', and beta''. When a (nuclear-encoded) sigma factor is associated with the core the holoenzyme is formed, which can initiate transcription.

It is found in the plastid. The protein localises to the chloroplast. The enzyme catalyses RNA(n) + a ribonucleoside 5'-triphosphate = RNA(n+1) + diphosphate. Functionally, DNA-dependent RNA polymerase catalyzes the transcription of DNA into RNA using the four ribonucleoside triphosphates as substrates. The polypeptide is DNA-directed RNA polymerase subunit alpha (Psathyrostachys juncea (Russian wildrye)).